Reading from the N-terminus, the 389-residue chain is S-adenosylmethionine synthase (389 aa).

H17 contacts ATP. D19 serves as a coordination point for Mg(2+). E45 serves as a coordination point for K(+). 2 residues coordinate L-methionine: E58 and Q102. A flexible loop region spans residues 102 to 112; sequence QSADIAQGVDA. Residues 167–169, D241, 247–248, A264, and K268 contribute to the ATP site; these read DAK and RK. D241 contributes to the L-methionine binding site. K272 is an L-methionine binding site.

The protein belongs to the AdoMet synthase family. As to quaternary structure, homotetramer; dimer of dimers. Mg(2+) serves as cofactor. It depends on K(+) as a cofactor.

The protein resides in the cytoplasm. It carries out the reaction L-methionine + ATP + H2O = S-adenosyl-L-methionine + phosphate + diphosphate. The protein operates within amino-acid biosynthesis; S-adenosyl-L-methionine biosynthesis; S-adenosyl-L-methionine from L-methionine: step 1/1. Catalyzes the formation of S-adenosylmethionine (AdoMet) from methionine and ATP. The overall synthetic reaction is composed of two sequential steps, AdoMet formation and the subsequent tripolyphosphate hydrolysis which occurs prior to release of AdoMet from the enzyme. The polypeptide is S-adenosylmethionine synthase (Parvibaculum lavamentivorans (strain DS-1 / DSM 13023 / NCIMB 13966)).